We begin with the raw amino-acid sequence, 360 residues long: Geranylgeranyl pyrophosphate synthase 3, chloroplastic (360 aa).

A chloroplast-targeting transit peptide spans 1–39 (MATTVHLSSFSLFIQSRGRRDNSISSVKSLKKRTGLSPS). Residues 24 to 54 (ISSVKSLKKRTGLSPSSALTSQGGRDMIPPE) are disordered. Positions 36–46 (LSPSSALTSQG) are enriched in polar residues. 3 residues coordinate isopentenyl diphosphate: Lys106, Arg109, and His138. 2 residues coordinate Mg(2+): Asp145 and Asp151. Dimethylallyl diphosphate is bound at residue Arg156. Arg157 contributes to the isopentenyl diphosphate binding site. Residues Lys245, Thr246, Gln283, Lys300, and Lys310 each coordinate dimethylallyl diphosphate.

The protein belongs to the FPP/GGPP synthase family. Monomer. Mg(2+) serves as cofactor. In terms of tissue distribution, mainly expressed in roots.

It localises to the plastid. The protein localises to the chloroplast. It carries out the reaction isopentenyl diphosphate + dimethylallyl diphosphate = (2E)-geranyl diphosphate + diphosphate. The enzyme catalyses isopentenyl diphosphate + (2E)-geranyl diphosphate = (2E,6E)-farnesyl diphosphate + diphosphate. The catalysed reaction is isopentenyl diphosphate + (2E,6E)-farnesyl diphosphate = (2E,6E,10E)-geranylgeranyl diphosphate + diphosphate. The protein operates within isoprenoid biosynthesis; farnesyl diphosphate biosynthesis; farnesyl diphosphate from geranyl diphosphate and isopentenyl diphosphate: step 1/1. It participates in isoprenoid biosynthesis; geranyl diphosphate biosynthesis; geranyl diphosphate from dimethylallyl diphosphate and isopentenyl diphosphate: step 1/1. It functions in the pathway isoprenoid biosynthesis; geranylgeranyl diphosphate biosynthesis; geranylgeranyl diphosphate from farnesyl diphosphate and isopentenyl diphosphate: step 1/1. Its function is as follows. Catalyzes the trans-addition of the three molecules of IPP onto DMAPP to form geranylgeranyl pyrophosphate. This chain is Geranylgeranyl pyrophosphate synthase 3, chloroplastic (GGPP3), found in Arabidopsis thaliana (Mouse-ear cress).